Here is a 386-residue protein sequence, read N- to C-terminus: Acyl-CoA ligase lcsD (386 aa).

The SBD1 stretch occupies residues 62-132 (ELEQTLLAIQ…ELLPACKIIQ (71 aa)). Residue 107–115 (AVGASGISK) participates in ATP binding. The interval 133–195 (GYGMTETTGV…LRSPSVVIGY (63 aa)) is SBD2. T137 contributes to the substrate binding site. Positions 216 and 235 each coordinate ATP. Residues 243–245 (RGL) and 313–316 (HLDG) each bind CoA. Position 331 (K331) interacts with ATP. The tract at residues 352 to 386 (REKAANGVHKVHVNGVKRPEKMEVFDLSSDDEDDD) is disordered.

Belongs to the ATP-dependent AMP-binding enzyme family.

It participates in secondary metabolite biosynthesis. Functionally, acyl-CoA ligase; part of the gene cluster that mediates the biosynthesis of the lipopeptide antibiotics leucinostatins that show extensive biological activities, including antimalarial, antiviral, antibacterial, antifungal, and antitumor activities, as well as phytotoxic. Leucinostatin A contains nine amino acid residues, including the unusual amino acid 4-methyl-L-proline (MePro), 2-amino-6-hydroxy-4-methyl-8-oxodecanoic acid (AHyMeOA), 3-hydroxyleucine (HyLeu), alpha-aminoisobutyric acid (AIB), beta-Ala, a 4-methylhex-2-enoic acid at the N-terminus as well as a N1,N1-dimethylpropane-1,2-diamine (DPD) at the C-terminus. The biosynthesis of leucinostatins is probably initiated with the assembly of 4-methylhex-2-enoic acid by a reducing PKS. Two reducing polyketide synthases, lcsB and lcsC, have been identified in the cluster and it is not clear which is the one that assembles 4-methylhex-2-enoic acid since both contain KS, AT, DH, cMT, ER, KR and ACP domains. The polyketide residue might be transferred to the NRPS lcsA, mediated by two additional enzymes, the acyl-CoA ligase lcsD and the thioesterase lcsE. The linear polyketide carboxylic acid, which is released from PKS, is converted to a CoA thioester by lcsD, and then lcsE hydrolyzes the thiol bond and shuttles the polyketide intermediate to lcsA. The C domain of the first module catalyzed the condensation of 4-methylhex-2-enoic acid and MePro carried by domain A1, followed by successive condensations of nine amino acids to trigger the elongation of the linear peptide. A5 and A6 domains of lcsA are proposed to incorporate leucine, A2 AHyMeOA, and A3 incorporates HyLeu. A4, A7 and A8 incorporate AIB. The AHyMeOA in leucinostatin A activated by the A2 might be produced by the second PKS (lcsB or lcsC) present within the cluster. The MePro is probably produced via leucine cyclization and may originate from a separate pathway, independent of the cluster. Another nonproteinogenic amino acid, beta-Ala, could be produced by an aspartic acid decarboxylase also localized outside of the cluster. Two candidates are VFPBJ_01400 and VFPBJ_10476. The final peptide scaffold may be released by the NAD(P)H-dependent thioester reductase (TE) at the C-terminal region of lcsA. Transamination of the lcsA product by the transaminase lcsP may produce DPD at the C-terminus. Further hydroxylation steps performed alternatively by the cytochrome P450 monooxygenases lcsI, lcsK and lcsN then yield the non-methylated leucinostatins precursor. It is also possible that leucines can be hydroxylated prior to their incorporation into the peptide. Varying extents of methylation then lead to the formation of leucinostatins A and B. The protein is Acyl-CoA ligase lcsD of Purpureocillium lilacinum (Paecilomyces lilacinus).